Here is a 210-residue protein sequence, read N- to C-terminus: Probable GTP-binding protein EngB (210 aa).

One can recognise an EngB-type G domain in the interval 29 to 203 (NGIEIAFAGR…SNKLDSWFAP (175 aa)). Residues 37 to 44 (GRSNAGKS), 64 to 68 (GRTQL), 82 to 85 (DLPG), 149 to 152 (TKAD), and 181 to 184 (IYSA) contribute to the GTP site. Mg(2+) contacts are provided by Ser-44 and Thr-66.

Belongs to the TRAFAC class TrmE-Era-EngA-EngB-Septin-like GTPase superfamily. EngB GTPase family. The cofactor is Mg(2+).

In terms of biological role, necessary for normal cell division and for the maintenance of normal septation. The chain is Probable GTP-binding protein EngB from Haemophilus ducreyi (strain 35000HP / ATCC 700724).